The chain runs to 340 residues: Phosphoribosylformylglycinamidine cyclo-ligase (340 aa).

The protein belongs to the AIR synthase family.

It localises to the cytoplasm. It carries out the reaction 2-formamido-N(1)-(5-O-phospho-beta-D-ribosyl)acetamidine + ATP = 5-amino-1-(5-phospho-beta-D-ribosyl)imidazole + ADP + phosphate + H(+). It functions in the pathway purine metabolism; IMP biosynthesis via de novo pathway; 5-amino-1-(5-phospho-D-ribosyl)imidazole from N(2)-formyl-N(1)-(5-phospho-D-ribosyl)glycinamide: step 2/2. This is Phosphoribosylformylglycinamidine cyclo-ligase from Acetivibrio thermocellus (strain ATCC 27405 / DSM 1237 / JCM 9322 / NBRC 103400 / NCIMB 10682 / NRRL B-4536 / VPI 7372) (Clostridium thermocellum).